We begin with the raw amino-acid sequence, 384 residues long: Putative RNA methyltransferase slr0064 (384 aa).

Residues Leu53–Ser164 form the THUMP domain.

It belongs to the methyltransferase superfamily.

The polypeptide is Putative RNA methyltransferase slr0064 (Synechocystis sp. (strain ATCC 27184 / PCC 6803 / Kazusa)).